Here is a 353-residue protein sequence, read N- to C-terminus: UPF0283 membrane protein YcjF (353 aa).

Over residues 1-19 (MSEPLKPRIDFAEPLKEEP) the composition is skewed to basic and acidic residues. Residues 1 to 35 (MSEPLKPRIDFAEPLKEEPTSAFKAQQTFSEAESR) form a disordered region. Helical transmembrane passes span 70–90 (MVMG…VQWT), 100–120 (VALG…GSVV), and 213–233 (ESTL…FIAW).

It belongs to the UPF0283 family.

It is found in the cell inner membrane. This is UPF0283 membrane protein YcjF from Salmonella dublin (strain CT_02021853).